The chain runs to 489 residues: uncharacterized protein (489 aa).

The next 11 helical transmembrane spans lie at 29-49 (FIAS…TGLG), 67-87 (LLYA…KYLG), 90-110 (WALA…WYFD), 119-139 (IFTG…TAYI), 152-172 (FIAT…FIAF), 186-206 (AVYI…ILFI), 276-296 (LNNV…TLIL), 308-328 (IIGL…ELGW), 351-371 (GGAL…IVSV), 397-417 (AAGM…LGQG), and 418-438 (IIYF…TSIF).

Its subcellular location is the membrane. This is an uncharacterized protein from Schizosaccharomyces pombe (strain 972 / ATCC 24843) (Fission yeast).